The following is an 87-amino-acid chain: Large ribosomal subunit protein bL28 (87 aa).

This sequence belongs to the bacterial ribosomal protein bL28 family.

This Akkermansia muciniphila (strain ATCC BAA-835 / DSM 22959 / JCM 33894 / BCRC 81048 / CCUG 64013 / CIP 107961 / Muc) protein is Large ribosomal subunit protein bL28.